Consider the following 162-residue polypeptide: Ribosome maturation factor RimP (162 aa).

It belongs to the RimP family.

The protein resides in the cytoplasm. Functionally, required for maturation of 30S ribosomal subunits. This chain is Ribosome maturation factor RimP, found in Syntrophotalea carbinolica (strain DSM 2380 / NBRC 103641 / GraBd1) (Pelobacter carbinolicus).